Here is a 423-residue protein sequence, read N- to C-terminus: Phosphoribosylamine--glycine ligase (423 aa).

Positions Lys-107–Asp-314 constitute an ATP-grasp domain. Val-133–Ser-194 contacts ATP. Mg(2+) contacts are provided by Glu-284 and Asn-286.

Belongs to the GARS family. The cofactor is Mg(2+). Mn(2+) serves as cofactor.

The enzyme catalyses 5-phospho-beta-D-ribosylamine + glycine + ATP = N(1)-(5-phospho-beta-D-ribosyl)glycinamide + ADP + phosphate + H(+). It participates in purine metabolism; IMP biosynthesis via de novo pathway; N(1)-(5-phospho-D-ribosyl)glycinamide from 5-phospho-alpha-D-ribose 1-diphosphate: step 2/2. This Neisseria meningitidis serogroup A / serotype 4A (strain DSM 15465 / Z2491) protein is Phosphoribosylamine--glycine ligase.